The following is a 231-amino-acid chain: Sugar fermentation stimulation protein homolog (231 aa).

The protein belongs to the SfsA family.

The protein is Sugar fermentation stimulation protein homolog of Pyrobaculum islandicum (strain DSM 4184 / JCM 9189 / GEO3).